A 137-amino-acid polypeptide reads, in one-letter code: Probable S-adenosyl-L-methionine-binding protein MTH_1797 (137 aa).

In terms of domain architecture, TsaA-like spans 8-137 (IRPVGVVRSP…YYEDIDSLGF (130 aa)). S-adenosyl-L-methionine-binding positions include 25 to 27 (PAQ), 63 to 64 (HL), Arg87, Leu97, and 117 to 120 (LDGS).

Belongs to the tRNA methyltransferase O family.

This Methanothermobacter thermautotrophicus (strain ATCC 29096 / DSM 1053 / JCM 10044 / NBRC 100330 / Delta H) (Methanobacterium thermoautotrophicum) protein is Probable S-adenosyl-L-methionine-binding protein MTH_1797.